A 215-amino-acid polypeptide reads, in one-letter code: tRNA (guanine-N(7)-)-methyltransferase (215 aa).

Residues Asp-43, Glu-68, Asn-95, and Asp-121 each coordinate S-adenosyl-L-methionine. Residue Asp-121 is part of the active site. Substrate contacts are provided by Lys-125 and Asp-157.

It belongs to the class I-like SAM-binding methyltransferase superfamily. TrmB family.

It catalyses the reaction guanosine(46) in tRNA + S-adenosyl-L-methionine = N(7)-methylguanosine(46) in tRNA + S-adenosyl-L-homocysteine. It participates in tRNA modification; N(7)-methylguanine-tRNA biosynthesis. Catalyzes the formation of N(7)-methylguanine at position 46 (m7G46) in tRNA. This chain is tRNA (guanine-N(7)-)-methyltransferase, found in Trichormus variabilis (strain ATCC 29413 / PCC 7937) (Anabaena variabilis).